The sequence spans 649 residues: Quinol oxidase subunit 1 (649 aa).

Over M1–L15 the chain is Extracellular. Residues I16 to L34 form a helical membrane-spanning segment. Over T35 to L56 the chain is Cytoplasmic. The chain crosses the membrane as a helical span at residues G57–G75. Topologically, residues L76–E97 are extracellular. Residues I98–G117 form a helical membrane-spanning segment. A Fe(II)-heme a-binding site is contributed by H102. The Cytoplasmic portion of the chain corresponds to L118–N139. Residues L140–V157 traverse the membrane as a helical segment. The Extracellular segment spans residues I158–L190. The helical transmembrane segment at Q191–L209 threads the bilayer. The Cytoplasmic segment spans residues K210 to T227. Residues T228 to L246 form a helical membrane-spanning segment. Topologically, residues A247–A272 are extracellular. A helical membrane pass occupies residues N273–G292. The Cu cation site is built by H280 and Y284. Positions H280–Y284 form a cross-link, 1'-histidyl-3'-tyrosine (His-Tyr). At I293–S315 the chain is on the cytoplasmic side. The chain crosses the membrane as a helical span at residues I316–G335. Cu cation-binding residues include H329 and H330. Residues N336–F343 lie on the Extracellular side of the membrane. Residues F344–W362 traverse the membrane as a helical segment. Over L363–M377 the chain is Cytoplasmic. The chain crosses the membrane as a helical span at residues L378–L397. Over A398–Q405 the chain is Extracellular. The helical transmembrane segment at Y406–V425 threads the bilayer. H415 provides a ligand contact to heme a3. Position 417 (H417) interacts with Fe(II)-heme a. Residues F426–F452 lie on the Cytoplasmic side of the membrane. Residues F453–L472 form a helical membrane-spanning segment. The Extracellular portion of the chain corresponds to Q473–T490. Residues L491 to C510 traverse the membrane as a helical segment. Over Y511–S584 the chain is Cytoplasmic. The helical transmembrane segment at N585–V604 threads the bilayer. The Extracellular segment spans residues F605–M610. A helical membrane pass occupies residues G611–N631. Topologically, residues G632–E649 are cytoplasmic.

This sequence belongs to the heme-copper respiratory oxidase family. Cu cation is required as a cofactor. It depends on ferriheme a as a cofactor. Heme A3. serves as cofactor.

Its subcellular location is the cell membrane. The enzyme catalyses 2 a quinol + O2 = 2 a quinone + 2 H2O. The protein operates within energy metabolism; oxidative phosphorylation. Functionally, catalyzes quinol oxidation with the concomitant reduction of oxygen to water. Major component for energy conversion during vegetative growth. The chain is Quinol oxidase subunit 1 (qoxB) from Bacillus subtilis (strain 168).